Reading from the N-terminus, the 1224-residue chain is WD repeat-containing protein 11 (1224 aa).

WD repeat units lie at residues 59-108 and 111-154; these read KHKA…AQCE and EHAK…KLWK. A phosphoserine mark is found at S205 and S209. The WD 3 repeat unit spans residues 354–393; the sequence is KTVRPFSMVCCPVNENAAALVVSDGRVMIWELKSAVCNRN. S402 and S406 each carry phosphoserine. WD repeat units lie at residues 471–510, 566–605, 708–745, 747–787, 793–831, and 893–940; these read RMCP…LHKE, NDES…LLRE, GSMG…SRGI, THRS…MVSS, NVTF…ACFR, and SLSN…HSLS.

Component of the complex WDR11 composed of C17orf75, FAM91A1 and WDR11; FAM91A1 and WDR11 are required for proper location of the complex. Interacts (via the N-terminal and the central portion of the protein) with EMX1. Interacts with GLI3; the interaction associateS EMX1 with GLI3. Interacts with TBC1D23; this interaction may be indirect and recruits TBC1D23 to AP-1-derived vesicles. In terms of tissue distribution, ubiquitous.

It is found in the cytoplasm. The protein localises to the cytoskeleton. The protein resides in the cilium basal body. Its subcellular location is the nucleus. It localises to the cilium axoneme. It is found in the cytoplasmic vesicle. The protein localises to the golgi apparatus. The protein resides in the trans-Golgi network. Functionally, involved in the Hedgehog (Hh) signaling pathway, is essential for normal ciliogenesis. Regulates the proteolytic processing of GLI3 and cooperates with the transcription factor EMX1 in the induction of downstream Hh pathway gene expression and gonadotropin-releasing hormone production. WDR11 complex facilitates the tethering of Adaptor protein-1 complex (AP-1)-derived vesicles. WDR11 complex acts together with TBC1D23 to facilitate the golgin-mediated capture of vesicles generated using AP-1. In Homo sapiens (Human), this protein is WD repeat-containing protein 11 (WDR11).